The following is a 305-amino-acid chain: Coenzyme PQQ synthesis protein B (305 aa).

The protein belongs to the PqqB family.

Its pathway is cofactor biosynthesis; pyrroloquinoline quinone biosynthesis. In terms of biological role, may be involved in the transport of PQQ or its precursor to the periplasm. In Cupriavidus taiwanensis (strain DSM 17343 / BCRC 17206 / CCUG 44338 / CIP 107171 / LMG 19424 / R1) (Ralstonia taiwanensis (strain LMG 19424)), this protein is Coenzyme PQQ synthesis protein B.